We begin with the raw amino-acid sequence, 106 residues long: N(2)-fixation sustaining protein CowN (106 aa).

This sequence belongs to the CowN family.

In terms of biological role, is required to sustain N(2)-dependent growth in the presence of low levels of carbon monoxide (CO). Probably acts by protecting the N(2) fixation ability of the nitrogenase complex, which is inactivated in the presence of CO. This chain is N(2)-fixation sustaining protein CowN, found in Denitrovibrio acetiphilus (strain DSM 12809 / NBRC 114555 / N2460).